We begin with the raw amino-acid sequence, 246 residues long: Probable transcriptional regulatory protein ACP_0521 (246 aa).

This sequence belongs to the TACO1 family.

Its subcellular location is the cytoplasm. This is Probable transcriptional regulatory protein ACP_0521 from Acidobacterium capsulatum (strain ATCC 51196 / DSM 11244 / BCRC 80197 / JCM 7670 / NBRC 15755 / NCIMB 13165 / 161).